The primary structure comprises 479 residues: ATP synthase subunit beta (479 aa).

153–160 (GGAGVGKT) provides a ligand contact to ATP.

Belongs to the ATPase alpha/beta chains family. As to quaternary structure, F-type ATPases have 2 components, CF(1) - the catalytic core - and CF(0) - the membrane proton channel. CF(1) has five subunits: alpha(3), beta(3), gamma(1), delta(1), epsilon(1). CF(0) has three main subunits: a(1), b(2) and c(9-12). The alpha and beta chains form an alternating ring which encloses part of the gamma chain. CF(1) is attached to CF(0) by a central stalk formed by the gamma and epsilon chains, while a peripheral stalk is formed by the delta and b chains.

It localises to the cell membrane. It carries out the reaction ATP + H2O + 4 H(+)(in) = ADP + phosphate + 5 H(+)(out). In terms of biological role, produces ATP from ADP in the presence of a proton gradient across the membrane. The catalytic sites are hosted primarily by the beta subunits. The sequence is that of ATP synthase subunit beta from Lactobacillus helveticus (strain DPC 4571).